A 158-amino-acid chain; its full sequence is Cyclic pyranopterin monophosphate synthase (158 aa).

Substrate-binding positions include 73–75 (LCH) and 110–111 (ME). Asp-125 is a catalytic residue.

Belongs to the MoaC family. In terms of assembly, homohexamer; trimer of dimers.

It catalyses the reaction (8S)-3',8-cyclo-7,8-dihydroguanosine 5'-triphosphate = cyclic pyranopterin phosphate + diphosphate. Its pathway is cofactor biosynthesis; molybdopterin biosynthesis. Functionally, catalyzes the conversion of (8S)-3',8-cyclo-7,8-dihydroguanosine 5'-triphosphate to cyclic pyranopterin monophosphate (cPMP). The sequence is that of Cyclic pyranopterin monophosphate synthase from Azotobacter vinelandii (strain DJ / ATCC BAA-1303).